We begin with the raw amino-acid sequence, 270 residues long: Dermonecrotic toxin LhSicTox-alphaIA2aiii (270 aa).

The active site involves histidine 2. 2 residues coordinate Mg(2+): glutamate 22 and aspartate 24. The active-site Nucleophile is the histidine 38. 2 cysteine pairs are disulfide-bonded: cysteine 42–cysteine 48 and cysteine 44–cysteine 187. Aspartate 82 lines the Mg(2+) pocket.

Belongs to the arthropod phospholipase D family. Class II subfamily. Requires Mg(2+) as cofactor. As to expression, expressed by the venom gland.

Its subcellular location is the secreted. It catalyses the reaction an N-(acyl)-sphingosylphosphocholine = an N-(acyl)-sphingosyl-1,3-cyclic phosphate + choline. The enzyme catalyses an N-(acyl)-sphingosylphosphoethanolamine = an N-(acyl)-sphingosyl-1,3-cyclic phosphate + ethanolamine. The catalysed reaction is a 1-acyl-sn-glycero-3-phosphocholine = a 1-acyl-sn-glycero-2,3-cyclic phosphate + choline. It carries out the reaction a 1-acyl-sn-glycero-3-phosphoethanolamine = a 1-acyl-sn-glycero-2,3-cyclic phosphate + ethanolamine. Its function is as follows. Dermonecrotic toxins cleave the phosphodiester linkage between the phosphate and headgroup of certain phospholipids (sphingolipid and lysolipid substrates), forming an alcohol (often choline) and a cyclic phosphate. This toxin acts on sphingomyelin (SM). It may also act on ceramide phosphoethanolamine (CPE), lysophosphatidylcholine (LPC) and lysophosphatidylethanolamine (LPE), but not on lysophosphatidylserine (LPS), and lysophosphatidylglycerol (LPG). It acts by transphosphatidylation, releasing exclusively cyclic phosphate products as second products. Induces dermonecrosis, hemolysis, increased vascular permeability, edema, inflammatory response, and platelet aggregation. The polypeptide is Dermonecrotic toxin LhSicTox-alphaIA2aiii (Loxosceles hirsuta (Recluse spider)).